A 313-amino-acid polypeptide reads, in one-letter code: Methionyl-tRNA formyltransferase (313 aa).

Position 113–116 (113–116 (SLLP)) interacts with (6S)-5,6,7,8-tetrahydrofolate.

This sequence belongs to the Fmt family.

The catalysed reaction is L-methionyl-tRNA(fMet) + (6R)-10-formyltetrahydrofolate = N-formyl-L-methionyl-tRNA(fMet) + (6S)-5,6,7,8-tetrahydrofolate + H(+). In terms of biological role, attaches a formyl group to the free amino group of methionyl-tRNA(fMet). The formyl group appears to play a dual role in the initiator identity of N-formylmethionyl-tRNA by promoting its recognition by IF2 and preventing the misappropriation of this tRNA by the elongation apparatus. The chain is Methionyl-tRNA formyltransferase from Francisella tularensis subsp. mediasiatica (strain FSC147).